We begin with the raw amino-acid sequence, 310 residues long: Serine/threonine-protein phosphatase 4 catalytic subunit (310 aa).

Mn(2+) is bound by residues D53, H55, D81, and N113. The active-site Proton donor is the H114. Mn(2+) is bound by residues H163 and H237. L310 carries the leucine methyl ester modification.

The protein belongs to the PPP phosphatase family. PP-4 (PP-X) subfamily. In terms of assembly, catalytic subunit of the histone H2A phosphatase complex (HTP-C) containing PPH3, PSY2 and PSY4. It depends on Mn(2+) as a cofactor.

The protein localises to the cytoplasm. Its subcellular location is the nucleus. It carries out the reaction O-phospho-L-seryl-[protein] + H2O = L-seryl-[protein] + phosphate. It catalyses the reaction O-phospho-L-threonyl-[protein] + H2O = L-threonyl-[protein] + phosphate. Its function is as follows. Involved in the dephosphorylation and activation of the transcription factor GLN3 in response to nutrient availability. Forms the histone H2A phosphatase complex in association with the regulatory subunits PSY2 and PSY4, which dephosphorylates H2AS128ph (gamma-H2A) that has been displaced from sites of DNA lesions in the double-stranded DNA break repair process. Dephosphorylation is necessary for efficient recovery from the DNA damage checkpoint. In Eremothecium gossypii (strain ATCC 10895 / CBS 109.51 / FGSC 9923 / NRRL Y-1056) (Yeast), this protein is Serine/threonine-protein phosphatase 4 catalytic subunit (PPH3).